The following is a 209-amino-acid chain: MNCIFLGPPGAGKGTLAFEVSKSYKIPHISTGDLFRAAIKEQTDLGKKVKAVIDSGALVSDDLTIALVKERLERDDTKKGFILDGFPRTIAQADALEDIVKIDSVINFDISDDEVIKRLSGRRVCSSCGQSFHIEFVKPKKEGICDSCSGDLMIRPDDKIEAIQKRLETYRNQTAPLIDYYTKKDLIVNIDARPASEKVLASFKVKFPH.

10–15 (GAGKGT) contributes to the ATP binding site. Positions 30 to 59 (STGDLFRAAIKEQTDLGKKVKAVIDSGALV) are NMP. AMP is bound by residues threonine 31, arginine 36, 57 to 59 (ALV), 85 to 88 (GFPR), and glutamine 92. The interval 121-158 (GRRVCSSCGQSFHIEFVKPKKEGICDSCSGDLMIRPDD) is LID. Arginine 122 serves as a coordination point for ATP. 2 residues coordinate Zn(2+): cysteine 125 and cysteine 128. An ATP-binding site is contributed by 131–132 (SF). Residues cysteine 145 and cysteine 148 each coordinate Zn(2+). AMP-binding residues include arginine 155 and arginine 166. Proline 194 contributes to the ATP binding site.

It belongs to the adenylate kinase family. As to quaternary structure, monomer.

The protein localises to the cytoplasm. It carries out the reaction AMP + ATP = 2 ADP. It participates in purine metabolism; AMP biosynthesis via salvage pathway; AMP from ADP: step 1/1. Catalyzes the reversible transfer of the terminal phosphate group between ATP and AMP. Plays an important role in cellular energy homeostasis and in adenine nucleotide metabolism. In Treponema denticola (strain ATCC 35405 / DSM 14222 / CIP 103919 / JCM 8153 / KCTC 15104), this protein is Adenylate kinase.